The sequence spans 292 residues: Undecaprenyl-diphosphatase (292 aa).

Transmembrane regions (helical) follow at residues 87-107 (MGWY…LFEE), 113-133 (FRDL…LGMV), 190-210 (AFLL…KDIG), 219-239 (ATIV…AWFM), and 250-270 (FVYY…FGVL).

It belongs to the UppP family.

It localises to the cell membrane. The enzyme catalyses di-trans,octa-cis-undecaprenyl diphosphate + H2O = di-trans,octa-cis-undecaprenyl phosphate + phosphate + H(+). Functionally, catalyzes the dephosphorylation of undecaprenyl diphosphate (UPP). Confers resistance to bacitracin. This is Undecaprenyl-diphosphatase from Thermobifida fusca (strain YX).